Consider the following 178-residue polypeptide: Large ribosomal subunit protein bL25 (178 aa).

This sequence belongs to the bacterial ribosomal protein bL25 family. CTC subfamily. As to quaternary structure, part of the 50S ribosomal subunit; part of the 5S rRNA/L5/L18/L25 subcomplex. Contacts the 5S rRNA. Binds to the 5S rRNA independently of L5 and L18.

In terms of biological role, this is one of the proteins that binds to the 5S RNA in the ribosome where it forms part of the central protuberance. The polypeptide is Large ribosomal subunit protein bL25 (Helicobacter pylori (strain P12)).